Reading from the N-terminus, the 481-residue chain is MSEPVVDNVTNKVEKMEVKEKTSAPPKEKKEKKSNKVQLKTPKGTQDYNPRQMTIREQVFDGIKQVFKRHGAVTIETPVFELKETLTGKYGEDSKLIYDLQDQGGEICSLRYDLTVPFARYVAMNGVLNIKRYHIARVYRRDNPIMTKGRFREFYQCDFDIAGTYDLMVPDAECLVMICEILEQVKVGDFQIKLNHRKLLDAIFAICGVPADKFRAICSAVDKLDKSPWEEVRKEMVEVKALDGAVADKIEKFVSLKDEPIKLLQHLRATGMCDGNKDATEALSQLETLFGYLECFGVTQHILFDLSLARGLDYYTGIIYEAVLTGQDRVGSIAAGGRYDGLVGMYGKKDVPAVGFSIGIERIFTILEDEYKKENKKIRENATQVFVVQMEKDLIKERLAIVSELWKAGINAEFSYKVNPKLPAQLNTADESNIPLIIIIGKSEVETNSLSVKTMHDRKQVSIERSNFTVKIKEILSTIPK.

Positions 1-48 (MSEPVVDNVTNKVEKMEVKEKTSAPPKEKKEKKSNKVQLKTPKGTQDY) are disordered. Residues 12–31 (KVEKMEVKEKTSAPPKEKKE) are compositionally biased toward basic and acidic residues.

This sequence belongs to the class-II aminoacyl-tRNA synthetase family.

It localises to the cytoplasm. It catalyses the reaction tRNA(His) + L-histidine + ATP = L-histidyl-tRNA(His) + AMP + diphosphate + H(+). The polypeptide is Histidine--tRNA ligase, cytoplasmic (hisS) (Dictyostelium discoideum (Social amoeba)).